Here is a 77-residue protein sequence, read N- to C-terminus: Large ribosomal subunit protein eL20 (77 aa).

The protein belongs to the eukaryotic ribosomal protein eL20 family. As to quaternary structure, part of the 50S ribosomal subunit. Binds 23S rRNA.

In Thermococcus kodakarensis (strain ATCC BAA-918 / JCM 12380 / KOD1) (Pyrococcus kodakaraensis (strain KOD1)), this protein is Large ribosomal subunit protein eL20.